A 60-amino-acid chain; its full sequence is Large ribosomal subunit protein uL30 (60 aa).

The protein belongs to the universal ribosomal protein uL30 family. Part of the 50S ribosomal subunit.

This is Large ribosomal subunit protein uL30 from Dehalococcoides mccartyi (strain ATCC BAA-2100 / JCM 16839 / KCTC 5957 / BAV1).